The primary structure comprises 228 residues: Interferon-induced transmembrane protein 10 (228 aa).

The Extracellular portion of the chain corresponds to 1–154 (MREGKRGPPC…PDTTEVNDYY (154 aa)). Residues 29-49 (AQGPGQCPAPLGDPASTTDGA) form a disordered region. The chain crosses the membrane as a helical span at residues 155-175 (LWSIFNFVYLNFCCLGFIALA). S-palmitoyl cysteine attachment occurs at residues C167 and C168. Over 176–200 (YSLKVRDKKLLNDLNGAVEDAKTAR) the chain is Cytoplasmic. A helical membrane pass occupies residues 201-221 (LFNITSSALAASCIILVFIFL). Residues 222–228 (RYPLTDY) lie on the Extracellular side of the membrane.

It belongs to the CD225/Dispanin family.

It localises to the cell membrane. This is Interferon-induced transmembrane protein 10 (IFITM10) from Homo sapiens (Human).